The following is a 505-amino-acid chain: Glutamate--cysteine ligase (505 aa).

Belongs to the glutamate--cysteine ligase type 1 family. Type 1 subfamily.

It catalyses the reaction L-cysteine + L-glutamate + ATP = gamma-L-glutamyl-L-cysteine + ADP + phosphate + H(+). Its pathway is sulfur metabolism; glutathione biosynthesis; glutathione from L-cysteine and L-glutamate: step 1/2. In Wigglesworthia glossinidia brevipalpis, this protein is Glutamate--cysteine ligase.